Consider the following 310-residue polypeptide: Thioredoxin reductase (310 aa).

34-41 (NGIQPGGQ) serves as a coordination point for FAD. A disulfide bridge connects residues cysteine 135 and cysteine 138. Position 281–290 (281–290 (DVQDKIYRQA)) interacts with FAD.

This sequence belongs to the class-II pyridine nucleotide-disulfide oxidoreductase family. Homodimer. The cofactor is FAD.

It is found in the cytoplasm. The catalysed reaction is [thioredoxin]-dithiol + NADP(+) = [thioredoxin]-disulfide + NADPH + H(+). The polypeptide is Thioredoxin reductase (trxB) (Rickettsia bellii (strain RML369-C)).